Consider the following 283-residue polypeptide: ACT domain-containing protein DS12, chloroplastic (283 aa).

The transit peptide at 1-56 (MAEMAVTAALRPCSGVSPAVSGTSHRRRRPAAWRALAPPPPHAGLRLSSPAVRVPR) directs the protein to the chloroplast. The disordered stretch occupies residues 14-78 (SGVSPAVSGT…SNTDTVPTPK (65 aa)). Residues 48-63 (SSPAVRVPRAASSAAV) are compositionally biased toward low complexity. 2 ACT domains span residues 91–171 (IVEI…ASSQ) and 206–276 (LLVV…LRRP).

It is found in the plastid. It localises to the chloroplast. The protein is ACT domain-containing protein DS12, chloroplastic of Oryza sativa subsp. indica (Rice).